A 384-amino-acid chain; its full sequence is S-adenosylmethionine synthase (384 aa).

Histidine 15 is a binding site for ATP. Aspartate 17 contributes to the Mg(2+) binding site. Position 43 (glutamate 43) interacts with K(+). The L-methionine site is built by glutamate 56 and glutamine 99. A flexible loop region spans residues 99–109 (QSPDINQGVDK). ATP-binding positions include 164–166 (DAK), 230–231 (RF), aspartate 239, 245–246 (RK), alanine 262, and lysine 266. Aspartate 239 serves as a coordination point for L-methionine. L-methionine is bound at residue lysine 270.

The protein belongs to the AdoMet synthase family. In terms of assembly, homotetramer; dimer of dimers. Mg(2+) serves as cofactor. The cofactor is K(+).

The protein resides in the cytoplasm. The catalysed reaction is L-methionine + ATP + H2O = S-adenosyl-L-methionine + phosphate + diphosphate. It functions in the pathway amino-acid biosynthesis; S-adenosyl-L-methionine biosynthesis; S-adenosyl-L-methionine from L-methionine: step 1/1. Its function is as follows. Catalyzes the formation of S-adenosylmethionine (AdoMet) from methionine and ATP. The overall synthetic reaction is composed of two sequential steps, AdoMet formation and the subsequent tripolyphosphate hydrolysis which occurs prior to release of AdoMet from the enzyme. This chain is S-adenosylmethionine synthase, found in Aliivibrio salmonicida (strain LFI1238) (Vibrio salmonicida (strain LFI1238)).